An 831-amino-acid chain; its full sequence is Serine/threonine-protein kinase ATG1 (831 aa).

Residues 21–321 (YSVEKEIGKG…FTDFFNNEVV (301 aa)) enclose the Protein kinase domain. Residues 27 to 35 (IGKGSFAVV) and lysine 50 each bind ATP. Aspartate 168 (proton acceptor) is an active-site residue. Polar residues-rich tracts occupy residues 360–382 (QQES…TGVR) and 405–419 (NSQN…ASQK). Positions 360–419 (QQESAHIPPTQTDENTSVQTGVRRTSGKERLATNHPPHQQIHPEDNSQNPEQSYQSASQK) are disordered.

The protein belongs to the protein kinase superfamily. Ser/Thr protein kinase family. APG1/unc-51/ULK1 subfamily. Homodimer. Forms a ternary complex with ATG13 and ATG17.

The protein localises to the cytoplasm. It localises to the preautophagosomal structure membrane. The catalysed reaction is L-seryl-[protein] + ATP = O-phospho-L-seryl-[protein] + ADP + H(+). It catalyses the reaction L-threonyl-[protein] + ATP = O-phospho-L-threonyl-[protein] + ADP + H(+). Serine/threonine protein kinase involved in the cytoplasm to vacuole transport (Cvt) and found to be essential in autophagy, where it is required for the formation of autophagosomes. Involved in the clearance of protein aggregates which cannot be efficiently cleared by the proteasome. Required for selective autophagic degradation of the nucleus (nucleophagy) as well as for mitophagy which contributes to regulate mitochondrial quantity and quality by eliminating the mitochondria to a basal level to fulfill cellular energy requirements and preventing excess ROS production. Also involved in endoplasmic reticulum-specific autophagic process, in selective removal of ER-associated degradation (ERAD) substrates. Plays a key role in ATG9 and ATG23 cycling through the pre-autophagosomal structure and is necessary to promote ATG18 binding to ATG9 through phosphorylation of ATG9. Catalyzes phosphorylation of ATG4, decreasing the interaction between ATG4 and ATG8 and impairing deconjugation of PE-conjugated forms of ATG8. In Kluyveromyces lactis (strain ATCC 8585 / CBS 2359 / DSM 70799 / NBRC 1267 / NRRL Y-1140 / WM37) (Yeast), this protein is Serine/threonine-protein kinase ATG1.